Reading from the N-terminus, the 125-residue chain is MRPLDAVELAEPEEVEVLEPEEDFEQFLLPVIHEMREDIASLTRERGRAPARNRGKLWEMDNMLIQIKTQVEASEESALNHLQGAGGAEPRGPRAEKADEKAQEMAKMAEMLVQLVRRIEKSESS.

The segment at 76 to 99 (ESALNHLQGAGGAEPRGPRAEKAD) is disordered. The stretch at 94 to 124 (RAEKADEKAQEMAKMAEMLVQLVRRIEKSES) forms a coiled coil.

This sequence belongs to the MORF4 family-associated protein family. In terms of assembly, found in a complex composed of MORF4L1, MRFAP1 and RB1. Interacts via its N-terminus with MORF4L1. Interacts with CSTB and MORF4L2. In terms of tissue distribution, widely expressed in all tissues examined and as early as 7 days during embryonic development.

It is found in the nucleus. The protein resides in the cytoplasm. The protein localises to the perinuclear region. This chain is MORF4 family-associated protein 1, found in Mus musculus (Mouse).